A 266-amino-acid polypeptide reads, in one-letter code: MARSALLNVMVQAVFKAGKSLARDFGEVQNLQVSLKGPADYVSQADRKAERIIREELMKARPTYGFLGEEGEEIKGTDGAHRWIVDPLDGTTNFLHGIPHFAISVALERQGEIVGAVVFNPATDELYTAERGGGAFLNDRRLRVGARKALSDAVIGTGTPHLGRGNHGKYLVELRHVMGEVAGIRRMGSASLDLAYVAAGRFDGFWERDLAAWDMAAGLLLIREAGGWSTDAEGGGKPLEAGSIVCGNEHIAKALREVIQRPIPSK.

Mg(2+) is bound by residues Glu-69, Asp-86, Leu-88, and Asp-89. Residue Glu-69 coordinates substrate. Substrate contacts are provided by residues 88–91, Arg-185, and Asp-214; that span reads LDGT. A Mg(2+)-binding site is contributed by Asp-214.

This sequence belongs to the inositol monophosphatase superfamily. Mg(2+) serves as cofactor.

The enzyme catalyses a myo-inositol phosphate + H2O = myo-inositol + phosphate. This is Inositol-1-monophosphatase (suhB) from Rhizobium meliloti (strain 1021) (Ensifer meliloti).